A 122-amino-acid polypeptide reads, in one-letter code: Large ribosomal subunit protein uL14 (122 aa).

The protein belongs to the universal ribosomal protein uL14 family. Part of the 50S ribosomal subunit. Forms a cluster with proteins L3 and L19. In the 70S ribosome, L14 and L19 interact and together make contacts with the 16S rRNA in bridges B5 and B8.

Binds to 23S rRNA. Forms part of two intersubunit bridges in the 70S ribosome. The protein is Large ribosomal subunit protein uL14 of Alkaliphilus oremlandii (strain OhILAs) (Clostridium oremlandii (strain OhILAs)).